The primary structure comprises 1012 residues: AP-2 complex subunit alpha-1 (1012 aa).

4 HEAT repeats span residues 254-289 (AMRALQYFPTIEDPSTRKALFEVLQRILMGTDVVKN), 354-391 (DIIKKHQSQIITSLKDPDISIRRRALDLLYGMCDVSNA), 393-430 (DIVEELLQYLSTAEFSMREELSLKAAILAEKFAPDLSW), and 525-565 (PTIP…CIDV). Positions 652-678 (STDPESVARSLSHPNGTLSNIDPQTPS) are disordered. The span at 663 to 675 (SHPNGTLSNIDPQ) shows a compositional bias: polar residues. In terms of domain architecture, GAE spans 742 to 841 (ALCLKDSGVL…LDFSYKFGAN (100 aa)).

The protein belongs to the adaptor complexes large subunit family. As to quaternary structure, adaptor protein complex 2 (AP-2) is a heterotetramer composed of two large adaptins (alpha-type and beta-type subunits), a medium adaptin (mu-type subunit) and a small adaptin (sigma-type subunit). Binds to EPSIN2.

The protein localises to the membrane. The protein resides in the coated pit. Subunit of the adaptor protein complex 2 (AP-2). Adaptor protein complexes function in protein transport via transport vesicles in different membrane traffic pathways. Adaptor protein complexes are vesicle coat components and appear to be involved in cargo selection and vesicle formation. AP-2 is involved in clathrin-dependent endocytosis in which cargo proteins are incorporated into vesicles surrounded by clathrin (clathrin-coated vesicles, CCVs) which are destined for fusion with the early endosome. The complex binds polyphosphoinositides. This Arabidopsis thaliana (Mouse-ear cress) protein is AP-2 complex subunit alpha-1 (ALPHA-ADR).